The following is a 583-amino-acid chain: Membrane protein insertase YidC (583 aa).

Transmembrane regions (helical) follow at residues 5–25 (SVTGLAIIAVIMIVWLQFMSP), 341–361 (PFAEFIILPVFSWMNGFVSNY), 362–382 (GLIIIIFAFLIKLVTYPLSMA), 427–447 (IGGCLPVVLQMPLLFAMFYVF), 473–493 (FGFAIPMYGSHIAVFPILMAV), and 520–540 (AMMLLFFNNMPAGLGLYYLMF).

The protein belongs to the OXA1/ALB3/YidC family. Type 1 subfamily. Interacts with the Sec translocase complex via SecD. Specifically interacts with transmembrane segments of nascent integral membrane proteins during membrane integration.

Its subcellular location is the cell inner membrane. Its function is as follows. Required for the insertion and/or proper folding and/or complex formation of integral membrane proteins into the membrane. Involved in integration of membrane proteins that insert both dependently and independently of the Sec translocase complex, as well as at least some lipoproteins. Aids folding of multispanning membrane proteins. This chain is Membrane protein insertase YidC, found in Pelodictyon phaeoclathratiforme (strain DSM 5477 / BU-1).